We begin with the raw amino-acid sequence, 284 residues long: Tryptophan 2,3-dioxygenase (284 aa).

Substrate is bound by residues 51 to 55, Tyr-113, and Arg-117; that span reads FIIQH. His-240 provides a ligand contact to heme. Residue Thr-254 participates in substrate binding.

It belongs to the tryptophan 2,3-dioxygenase family. In terms of assembly, homotetramer. It depends on heme as a cofactor.

The enzyme catalyses L-tryptophan + O2 = N-formyl-L-kynurenine. Its pathway is amino-acid degradation; L-tryptophan degradation via kynurenine pathway; L-kynurenine from L-tryptophan: step 1/2. Heme-dependent dioxygenase that catalyzes the oxidative cleavage of the L-tryptophan (L-Trp) pyrrole ring and converts L-tryptophan to N-formyl-L-kynurenine. Catalyzes the oxidative cleavage of the indole moiety. This is Tryptophan 2,3-dioxygenase from Arthrobacter sp. (strain FB24).